The chain runs to 2190 residues: Integrator complex subunit 1 (2190 aa).

The interval Met-1 to Ala-61 is disordered. Ser-13 carries the phosphoserine modification. The segment covering Gly-34–Thr-44 has biased composition (polar residues). Lys-47 carries the post-translational modification N6-acetyllysine. Phosphothreonine is present on Thr-83. 3 positions are modified to phosphoserine: Ser-87, Ser-307, and Ser-924. Residues Ala-922–Gln-945 form a disordered region. The span at Ala-923–Glu-932 shows a compositional bias: acidic residues. Residues Thr-1159 to Pro-1179 traverse the membrane as a helical segment. The tract at residues Ser-1311–Gln-1334 is disordered. The segment covering Pro-1314–Lys-1323 has biased composition (basic and acidic residues). A phosphoserine mark is found at Ser-1318, Ser-1326, Ser-1327, and Ser-1395.

The protein belongs to the Integrator subunit 1 family. As to quaternary structure, component of the Integrator complex, composed of core subunits INTS1, INTS2, INTS3, INTS4, INTS5, INTS6, INTS7, INTS8, INTS9/RC74, INTS10, INTS11/CPSF3L, INTS12, INTS13, INTS14 and INTS15. The core complex associates with protein phosphatase 2A subunits PPP2CA and PPP2R1A, to form the Integrator-PP2A (INTAC) complex. Interacts with ESRRB, ESRRB is not a core component of the Integrator complex and this association is a bridge for the interaction with the multiprotein complex Integrator; attracts the transcriptional machinery.

It is found in the nucleus. The protein localises to the nucleus membrane. Its function is as follows. Component of the integrator complex, a multiprotein complex that terminates RNA polymerase II (Pol II) transcription in the promoter-proximal region of genes. The integrator complex provides a quality checkpoint during transcription elongation by driving premature transcription termination of transcripts that are unfavorably configured for transcriptional elongation: the complex terminates transcription by (1) catalyzing dephosphorylation of the C-terminal domain (CTD) of Pol II subunit POLR2A/RPB1 and SUPT5H/SPT5, (2) degrading the exiting nascent RNA transcript via endonuclease activity and (3) promoting the release of Pol II from bound DNA. The integrator complex is also involved in terminating the synthesis of non-coding Pol II transcripts, such as enhancer RNAs (eRNAs), small nuclear RNAs (snRNAs), telomerase RNAs and long non-coding RNAs (lncRNAs). Within the integrator complex, INTS1 is involved in the post-termination step: INTS1 displaces INTS3 and the SOSS factors, allowing the integrator complex to return to the closed conformation, ready to bind to the paused elongation complex for another termination cycle. Mediates recruitment of cytoplasmic dynein to the nuclear envelope, probably as component of the integrator complex. The sequence is that of Integrator complex subunit 1 from Homo sapiens (Human).